We begin with the raw amino-acid sequence, 317 residues long: Methionyl-tRNA formyltransferase (317 aa).

109–112 lines the (6S)-5,6,7,8-tetrahydrofolate pocket; that stretch reads SLLP.

It belongs to the Fmt family.

It catalyses the reaction L-methionyl-tRNA(fMet) + (6R)-10-formyltetrahydrofolate = N-formyl-L-methionyl-tRNA(fMet) + (6S)-5,6,7,8-tetrahydrofolate + H(+). In terms of biological role, attaches a formyl group to the free amino group of methionyl-tRNA(fMet). The formyl group appears to play a dual role in the initiator identity of N-formylmethionyl-tRNA by promoting its recognition by IF2 and preventing the misappropriation of this tRNA by the elongation apparatus. This chain is Methionyl-tRNA formyltransferase, found in Desulforamulus reducens (strain ATCC BAA-1160 / DSM 100696 / MI-1) (Desulfotomaculum reducens).